A 310-amino-acid chain; its full sequence is Dermonecrotic toxin LiSicTox-alphaII2 (310 aa).

An N-terminal signal peptide occupies residues 1–18 (MLLRIALILGCWSILSEG). The propeptide occupies 19-26 (AENDIAER). The active site involves His38. Mg(2+) is bound by residues Glu58 and Asp60. Residue His74 is the Nucleophile of the active site. Cystine bridges form between Cys78–Cys84 and Cys80–Cys224. Asn99 carries an N-linked (GlcNAc...) asparagine glycan. Residue Asp118 coordinates Mg(2+).

It belongs to the arthropod phospholipase D family. Class II subfamily. Requires Mg(2+) as cofactor. Expressed by the venom gland.

The protein localises to the secreted. The catalysed reaction is an N-(acyl)-sphingosylphosphocholine = an N-(acyl)-sphingosyl-1,3-cyclic phosphate + choline. It carries out the reaction an N-(acyl)-sphingosylphosphoethanolamine = an N-(acyl)-sphingosyl-1,3-cyclic phosphate + ethanolamine. It catalyses the reaction a 1-acyl-sn-glycero-3-phosphocholine = a 1-acyl-sn-glycero-2,3-cyclic phosphate + choline. The enzyme catalyses a 1-acyl-sn-glycero-3-phosphoethanolamine = a 1-acyl-sn-glycero-2,3-cyclic phosphate + ethanolamine. In terms of biological role, dermonecrotic toxins cleave the phosphodiester linkage between the phosphate and headgroup of certain phospholipids (sphingolipid and lysolipid substrates), forming an alcohol (often choline) and a cyclic phosphate. This toxin acts on sphingomyelin (SM). It may also act on ceramide phosphoethanolamine (CPE), lysophosphatidylcholine (LPC) and lysophosphatidylethanolamine (LPE), but not on lysophosphatidylserine (LPS), and lysophosphatidylglycerol (LPG). It acts by transphosphatidylation, releasing exclusively cyclic phosphate products as second products. Induces dermonecrosis, hemolysis, increased vascular permeability, edema, inflammatory response, and platelet aggregation. In Loxosceles intermedia (Brown spider), this protein is Dermonecrotic toxin LiSicTox-alphaII2.